The primary structure comprises 77 residues: Defensin-like protein 161 (77 aa).

An N-terminal signal peptide occupies residues Met-1–Gly-27. 4 disulfides stabilise this stretch: Cys-30–Cys-77, Cys-40–Cys-59, Cys-45–Cys-71, and Cys-49–Cys-73.

This sequence belongs to the DEFL family.

It localises to the secreted. The polypeptide is Defensin-like protein 161 (LCR27) (Arabidopsis thaliana (Mouse-ear cress)).